The primary structure comprises 250 residues: PF03932 family protein CutC (250 aa).

The protein belongs to the CutC family.

The protein localises to the cytoplasm. In Vibrio vulnificus (strain YJ016), this protein is PF03932 family protein CutC.